Here is a 345-residue protein sequence, read N- to C-terminus: Phosphoribosylformylglycinamidine cyclo-ligase (345 aa).

The protein belongs to the AIR synthase family.

It is found in the cytoplasm. It catalyses the reaction 2-formamido-N(1)-(5-O-phospho-beta-D-ribosyl)acetamidine + ATP = 5-amino-1-(5-phospho-beta-D-ribosyl)imidazole + ADP + phosphate + H(+). The protein operates within purine metabolism; IMP biosynthesis via de novo pathway; 5-amino-1-(5-phospho-D-ribosyl)imidazole from N(2)-formyl-N(1)-(5-phospho-D-ribosyl)glycinamide: step 2/2. The protein is Phosphoribosylformylglycinamidine cyclo-ligase of Anaeromyxobacter dehalogenans (strain 2CP-C).